Reading from the N-terminus, the 504-residue chain is Glycerol kinase (504 aa).

An ADP-binding site is contributed by Thr-13. Residues Thr-13, Thr-14, and Ser-15 each contribute to the ATP site. Thr-13 is a binding site for sn-glycerol 3-phosphate. Residue Arg-17 coordinates ADP. Sn-glycerol 3-phosphate contacts are provided by Arg-83, Glu-84, and Tyr-135. Arg-83, Glu-84, and Tyr-135 together coordinate glycerol. His-231 is modified (phosphohistidine; by HPr). Asp-245 is a sn-glycerol 3-phosphate binding site. The glycerol site is built by Asp-245 and Gln-246. Positions 267 and 310 each coordinate ADP. 4 residues coordinate ATP: Thr-267, Gly-310, Gln-314, and Gly-411. ADP contacts are provided by Gly-411 and Asn-415.

Belongs to the FGGY kinase family. In terms of assembly, homotetramer and homodimer (in equilibrium). Post-translationally, the phosphoenolpyruvate-dependent sugar phosphotransferase system (PTS), including enzyme I, and histidine-containing protein (HPr) are required for the phosphorylation, which leads to the activation of the enzyme.

It carries out the reaction glycerol + ATP = sn-glycerol 3-phosphate + ADP + H(+). The protein operates within polyol metabolism; glycerol degradation via glycerol kinase pathway; sn-glycerol 3-phosphate from glycerol: step 1/1. Activated by phosphorylation and inhibited by fructose 1,6-bisphosphate (FBP). In terms of biological role, key enzyme in the regulation of glycerol uptake and metabolism. Catalyzes the phosphorylation of glycerol to yield sn-glycerol 3-phosphate. In Pediococcus pentosaceus (strain ATCC 25745 / CCUG 21536 / LMG 10740 / 183-1w), this protein is Glycerol kinase.